Here is a 201-residue protein sequence, read N- to C-terminus: MTDFALNAEVRSDLGKGASRRLRRNVSMVPAVIYGGDKAPQSISLLAKDLAKLLENEAAFSHVLAVNVAGATENVVIKALQRHPAKGFVLHADFQRVVAGQKLTAHVPLHFINEATAVGVKQQGGEISHTINEVEVSCLPKDLPEFIEVDMAAVEVGQTVHMSDLKLPKGVELVALAHGNDLAVSNIHASRVKAEDEGAAE.

Belongs to the bacterial ribosomal protein bL25 family. CTC subfamily. In terms of assembly, part of the 50S ribosomal subunit; part of the 5S rRNA/L5/L18/L25 subcomplex. Contacts the 5S rRNA. Binds to the 5S rRNA independently of L5 and L18.

Functionally, this is one of the proteins that binds to the 5S RNA in the ribosome where it forms part of the central protuberance. The sequence is that of Large ribosomal subunit protein bL25 from Ectopseudomonas mendocina (strain ymp) (Pseudomonas mendocina).